The sequence spans 881 residues: Formin-like protein 10 (881 aa).

An N-terminal signal peptide occupies residues methionine 1–glycine 24. Positions leucine 194–proline 223 are disordered. Residues valine 236–phenylalanine 256 traverse the membrane as a helical segment. Positions threonine 333 to serine 346 are enriched in polar residues. Disordered regions lie at residues threonine 333 to alanine 427, glutamate 683 to glutamine 703, and alanine 837 to aspartate 881. Residues leucine 351 to proline 390 show a composition bias toward pro residues. Over residues leucine 400–glutamate 424 the composition is skewed to low complexity. The FH2 domain occupies glutamate 422–asparagine 854. Polar residues predominate over residues serine 692–serine 701. Positions serine 846–glutamine 865 are enriched in low complexity. Residues leucine 870–aspartate 881 show a composition bias toward basic and acidic residues.

Belongs to the formin-like family. Class-I subfamily.

It is found in the membrane. The polypeptide is Formin-like protein 10 (FH10) (Oryza sativa subsp. japonica (Rice)).